The chain runs to 139 residues: Plastocyanin (139 aa).

The first 34 residues, 1–34 (MKLIAQISRSLSLALFALVLMVGSFVAVMSPAAA), serve as a signal peptide directing secretion. Positions 35 to 139 (ETFTVKMGAD…GMVGKITVEG (105 aa)) constitute a Plastocyanin-like domain. 4 residues coordinate Cu cation: His73, Cys123, His126, and Met131.

Belongs to the plastocyanin family. Cu(2+) serves as cofactor.

Its subcellular location is the cellular thylakoid membrane. Functionally, participates in electron transfer between P700 and the cytochrome b6-f complex in photosystem I. The chain is Plastocyanin (petE) from Leptolyngbya laminosa (Phormidium laminosum).